Consider the following 175-residue polypeptide: Trafficking protein particle complex subunit 20 (175 aa).

Belongs to the TRAPP small subunits family. Sedlin subfamily. In terms of assembly, part of the multisubunit TRAPP (transport protein particle) I complex composed of BET3, BET5, TRS20, TRS23, TRS31 and TRS33. Part of the multisubunit TRAPP (transport protein particle) II complex composed of BET3, BET5, TRS20, TRS23, TRS31, TRS33, TRS65, TRS85, TRS120 and TRS130. Part of the multisubunit TRAPP (transport protein particle) III complex composed of BET3, BET5, TRS20, TRS23, TRS31, TRS33 and TRS85.

The protein localises to the golgi apparatus. It is found in the cis-Golgi network. It localises to the endoplasmic reticulum. The protein resides in the preautophagosomal structure. Component of the TRAPP I, TRAPP II and TRAPP III complexes which act as guanine nucleotide exchange factors (GEF) for YPT1. TRAPP I plays a key role in the late stages of endoplasmic reticulum to Golgi traffic. TRAPP II plays a role in intra-Golgi transport. TRAPP III plays a role in autophagosome formation. The chain is Trafficking protein particle complex subunit 20 (TRS20) from Saccharomyces cerevisiae (strain ATCC 204508 / S288c) (Baker's yeast).